The sequence spans 274 residues: 2,3,4,5-tetrahydropyridine-2,6-dicarboxylate N-succinyltransferase (274 aa).

This sequence belongs to the transferase hexapeptide repeat family.

It localises to the cytoplasm. It catalyses the reaction (S)-2,3,4,5-tetrahydrodipicolinate + succinyl-CoA + H2O = (S)-2-succinylamino-6-oxoheptanedioate + CoA. It participates in amino-acid biosynthesis; L-lysine biosynthesis via DAP pathway; LL-2,6-diaminopimelate from (S)-tetrahydrodipicolinate (succinylase route): step 1/3. This chain is 2,3,4,5-tetrahydropyridine-2,6-dicarboxylate N-succinyltransferase, found in Shigella boydii serotype 18 (strain CDC 3083-94 / BS512).